The following is a 1494-amino-acid chain: ABC multidrug transporter atrG (1494 aa).

Positions 1-11 are enriched in polar residues; sequence MSLLGTINPNL. Disordered stretches follow at residues 1-48 and 84-105; these read MSLL…RTSD and FSVS…TLNP. N-linked (GlcNAc...) asparagine glycosylation is present at asparagine 41. Asparagine 141 and asparagine 340 each carry an N-linked (GlcNAc...) asparagine glycan. The ABC transporter 1 domain maps to 162 to 416; the sequence is LQVGALFRAV…FTTMGFECPE (255 aa). Helical transmembrane passes span 527-547 and 561-581; these read LTMS…SVFY and ALLF…ILTL. A glycan (N-linked (GlcNAc...) asparagine) is linked at asparagine 622. Transmembrane regions (helical) follow at residues 636 to 656, 669 to 689, and 778 to 798; these read GPFF…SMLF, ALVP…FTIP, and GIMF…TEYI. The N-linked (GlcNAc...) asparagine glycan is linked to asparagine 835. One can recognise an ABC transporter 2 domain in the interval 852 to 1095; the sequence is FHWQDVCYDI…LASYFERNGA (244 aa). 888-895 contacts ATP; it reads GVSGAGKT. Transmembrane regions (helical) follow at residues 1191-1211, 1227-1247, 1276-1296, 1312-1332, and 1351-1371; these read YIYS…FSFF, IFML…NFVT, LPWN…PIGL, LMWL…HMMI, and LCLI…FWIF. Asparagine 1410 and asparagine 1432 each carry an N-linked (GlcNAc...) asparagine glycan. The helical transmembrane segment at 1463-1483 threads the bilayer; sequence FGIMWAFIVFNIAAAVFIYWL.

Belongs to the ABC transporter superfamily. ABCG family. PDR (TC 3.A.1.205) subfamily.

Its subcellular location is the cell membrane. The catalysed reaction is (R)-miconazole(in) + ATP + H2O = (R)-miconazole(out) + ADP + phosphate + H(+). Functionally, pleiotropic ABC efflux transporter involved in the basal level of azole susceptibility. Confers resistance to miconazole and clotrimazole. This is ABC multidrug transporter atrG from Aspergillus oryzae (strain ATCC 42149 / RIB 40) (Yellow koji mold).